An 886-amino-acid polypeptide reads, in one-letter code: Alanine--tRNA ligase (886 aa).

Histidine 564, histidine 568, cysteine 666, and histidine 670 together coordinate Zn(2+).

This sequence belongs to the class-II aminoacyl-tRNA synthetase family. Zn(2+) is required as a cofactor.

It localises to the cytoplasm. The enzyme catalyses tRNA(Ala) + L-alanine + ATP = L-alanyl-tRNA(Ala) + AMP + diphosphate. Catalyzes the attachment of alanine to tRNA(Ala) in a two-step reaction: alanine is first activated by ATP to form Ala-AMP and then transferred to the acceptor end of tRNA(Ala). Also edits incorrectly charged Ser-tRNA(Ala) and Gly-tRNA(Ala) via its editing domain. This chain is Alanine--tRNA ligase, found in Prochlorococcus marinus (strain MIT 9301).